Consider the following 288-residue polypeptide: Sulfur carrier protein FdhD (288 aa).

Cysteine 122 functions as the Cysteine persulfide intermediate in the catalytic mechanism. Position 268 to 273 (268 to 273) interacts with Mo-bis(molybdopterin guanine dinucleotide); it reads FVRGER.

The protein belongs to the FdhD family.

It is found in the cytoplasm. Functionally, required for formate dehydrogenase (FDH) activity. Acts as a sulfur carrier protein that transfers sulfur from IscS to the molybdenum cofactor prior to its insertion into FDH. In Anaeromyxobacter dehalogenans (strain 2CP-C), this protein is Sulfur carrier protein FdhD.